The chain runs to 85 residues: Large ribosomal subunit protein bL27 (85 aa).

The segment at 1-20 is disordered; sequence MATKKAGGSTRNGRDSEAKR.

Belongs to the bacterial ribosomal protein bL27 family.

The sequence is that of Large ribosomal subunit protein bL27 from Actinobacillus succinogenes (strain ATCC 55618 / DSM 22257 / CCUG 43843 / 130Z).